The sequence spans 288 residues: Methyltransferase ucsB (288 aa).

Residues D87 and 121-122 (DA) contribute to the S-adenosyl-L-methionine site.

The protein belongs to the class I-like SAM-binding methyltransferase superfamily.

It participates in mycotoxin biosynthesis. Its function is as follows. Methyltransferase; part of the gene cluster that mediates the biosynthesis of UCS1025A, a member of the pyrrolizidinone family that acts as a strong telomerase inhibitor and displays potent antibacterial and antitumor properties. These compounds share a hemiaminal-containing pyrrolizidinone core fused with a gamma-lactone, giving a furopyrrolizidine that is connected to a decalin fragment. The polyketide synthase module (PKS) of the PKS-NRPS ucsA is responsible for the synthesis of the polyketide backbone via the condensation of an acetyl-CoA starter unit with 6 malonyl-CoA units. The downstream nonribosomal peptide synthetase (NRPS) module then amidates the carboxyl end of the polyketide with a 2S,3S-methylproline derived from L-isoleucine by the 2-oxoglutarate-dependent dioxygenase ucsF which converts L-isoleucine to (4S,5S)-4-methylpyrroline-5-carboxylate that is further converted to 2S,3S-methylproline by the pyrroline-5-carboxylate reductase ucsG. Reductive release of the completed aminoacyl polyketide from the assembly line can form the 3-pyrrolin-2-one structure via an intramolecular Knoevenagel reaction. Because ucsA lacks a designated enoylreductase (ER) domain, the required activity is provided the enoyl reductase ucsL. This keto acyclic precursor is the substrate of the Diels-Alderase ucsH, that catalyzes the Diels-Alder cycloaddition. Oxidation of the 3S-methyl group to a carboxylate by the cytochrome P450 monooxygenase ucsK allows an oxa-Michael cyclization that might involve the reductase/dehydrogenase ucsI and which furnishes the furopyrrolizidine. The oxidase ucsJ likely plays a critical role in stereoselective reduction of the C5-C6 double bond to afford the required R-configured carboxylate group. Further enolization and oxidation at C5 by an unidentified enzyme affords the last intermediate that can undergo oxa-Michael cyclization to yield UCS1025A. The polypeptide is Methyltransferase ucsB (Acremonium sp).